The sequence spans 375 residues: Venom allergen 5 (375 aa).

Positions 1–26 (MSAPVGIPSLLLALCALLCVLNAVRS) are cleaved as a signal peptide. In terms of domain architecture, SCP spans 66 to 210 (VRLHNNLRSK…RRYTQIVCNY (145 aa)). N-linked (GlcNAc...) asparagine glycosylation is found at Asn300 and Asn366.

The protein belongs to the CRISP family. Venom allergen 5-like subfamily. Post-translationally, contains 9 disulfide bonds. In terms of tissue distribution, expressed by the venom gland.

The protein localises to the secreted. The chain is Venom allergen 5 from Lycosa singoriensis (Wolf spider).